An 88-amino-acid polypeptide reads, in one-letter code: Small ribosomal subunit protein bS20 (88 aa).

The interval 1 to 21 (MANTTSAKKATRKIARRTAVN) is disordered.

The protein belongs to the bacterial ribosomal protein bS20 family.

In terms of biological role, binds directly to 16S ribosomal RNA. In Agrobacterium fabrum (strain C58 / ATCC 33970) (Agrobacterium tumefaciens (strain C58)), this protein is Small ribosomal subunit protein bS20.